The chain runs to 515 residues: Protein disulfide-isomerase (515 aa).

A signal peptide spans Met-1–Ala-22. Thioredoxin domains lie at Glu-23–Gly-139 and Phe-351–Gln-480. Active-site nucleophile residues include Cys-58, Cys-61, Cys-402, and Cys-405. 2 disulfides stabilise this stretch: Cys-58/Cys-61 and Cys-402/Cys-405. Residues Ser-477–Leu-515 form a disordered region. Acidic residues predominate over residues Ala-484–Glu-507. The Prevents secretion from ER signature appears at Lys-512–Leu-515.

The protein belongs to the protein disulfide isomerase family. As to quaternary structure, heterodimer; heterodimerizes with the protein microsomal triglyceride transfer MTTP. Homodimer. Monomers and homotetramers may also occur. Also constitutes the structural subunit of prolyl 4-hydroxylase. Stabilizes this enzyme and retains it in the ER without contributing to the catalytic activity. Binds UBQLN1.

Its subcellular location is the endoplasmic reticulum. It localises to the endoplasmic reticulum lumen. It is found in the cell membrane. It carries out the reaction Catalyzes the rearrangement of -S-S- bonds in proteins.. This multifunctional protein catalyzes the formation, breakage and rearrangement of disulfide bonds. At the cell surface, seems to act as a reductase that cleaves disulfide bonds of proteins attached to the cell. May therefore cause structural modifications of exofacial proteins. Inside the cell, seems to form/rearrange disulfide bonds of nascent proteins. At high concentrations, functions as a chaperone that inhibits aggregation of misfolded proteins. At low concentrations, facilitates aggregation (anti-chaperone activity). Also acts a structural subunit of various enzymes such as prolyl 4-hydroxylase. This chain is Protein disulfide-isomerase (P4HB), found in Gallus gallus (Chicken).